The following is a 169-amino-acid chain: ATP-dependent Clp protease adapter protein CLPS2, chloroplastic (169 aa).

A chloroplast-targeting transit peptide spans 1–33 (MLATRCKCNLPSRSFVAPARSVRTRALHVEGRF). The tract at residues 67-92 (DAKTDNGNNGSNTDKDKKSPPGGGNY) is disordered.

The protein belongs to the ClpS family.

It is found in the plastid. It localises to the chloroplast stroma. In terms of biological role, small adapter protein that modulate the activity of plastid Clp protease system (CLPC). Probably involved in substrate selection for plastid CLPC. This is ATP-dependent Clp protease adapter protein CLPS2, chloroplastic from Chlamydomonas reinhardtii (Chlamydomonas smithii).